The following is a 2555-amino-acid chain: Ubiquitin carboxyl-terminal hydrolase 9Y (2555 aa).

The interval M1–P66 is disordered. Residues N13–A45 are compositionally biased toward polar residues. The residue at position 589 (S589) is a Phosphoserine. T591 bears the Phosphothreonine mark. The segment at N972 to D997 is disordered. Residues P974 to S984 show a composition bias toward low complexity. The USP domain maps to V1559–M1958. C1568 functions as the Nucleophile in the catalytic mechanism. Positions 1729, 1731, 1773, and 1776 each coordinate Zn(2+). The active-site Proton acceptor is H1881. Phosphoserine is present on S2444. Over residues P2476 to A2485 the composition is skewed to acidic residues. The interval P2476–Q2555 is disordered. 2 stretches are compositionally biased toward polar residues: residues P2504 to V2514 and N2528 to Q2555. Residue Y2541 is modified to Phosphotyrosine. S2548 is modified (phosphoserine).

It belongs to the peptidase C19 family. As to expression, widely expressed in embryonic and adult tissues.

It catalyses the reaction Thiol-dependent hydrolysis of ester, thioester, amide, peptide and isopeptide bonds formed by the C-terminal Gly of ubiquitin (a 76-residue protein attached to proteins as an intracellular targeting signal).. It functions in the pathway protein modification; protein ubiquitination. Its function is as follows. Deubiquitinase that mediates deubiquitination of target proteins. May stabilize target proteins that are important for male germ cell development. This chain is Ubiquitin carboxyl-terminal hydrolase 9Y, found in Homo sapiens (Human).